We begin with the raw amino-acid sequence, 487 residues long: DNA ligase (487 aa).

Lys-159 serves as the catalytic N6-AMP-lysine intermediate. Residues Arg-164, Arg-182, and Glu-217 each contribute to the ATP site. Glu-217 serves as a coordination point for a divalent metal cation. An interaction with the sliding clamp region spans residues 229 to 237; it reads EGLDFLFDA. Glu-344 is an a divalent metal cation binding site. 2 residues coordinate ATP: Arg-359 and Lys-365.

Belongs to the ATP-dependent DNA ligase family. In terms of assembly, interacts with the sliding clamp. A divalent metal cation serves as cofactor.

The enzyme catalyses ATP + (deoxyribonucleotide)n-3'-hydroxyl + 5'-phospho-(deoxyribonucleotide)m = (deoxyribonucleotide)n+m + AMP + diphosphate.. Functionally, DNA ligase, which is expressed in the early stage of lytic development, has been implicated in T4 DNA synthesis and genetic recombination. It may also play a role in T4 DNA repair. This is DNA ligase (30) from Escherichia coli (Bacteriophage T6).